The sequence spans 255 residues: Small ribosomal subunit protein uS2 (255 aa).

The disordered stretch occupies residues 231–255 (RLQTGAEEEFSTEGEEVVEETPAEA). The span at 236 to 255 (AEEEFSTEGEEVVEETPAEA) shows a compositional bias: acidic residues.

The protein belongs to the universal ribosomal protein uS2 family.

This Geobacter sp. (strain M21) protein is Small ribosomal subunit protein uS2.